The primary structure comprises 604 residues: Putative O-acetyltransferase SACOL0978 (604 aa).

A run of 11 helical transmembrane segments spans residues 15 to 35 (YIPG…IYHL), 43 to 63 (GFLG…SLLL), 85 to 105 (LLPA…LLKS), 150 to 170 (AIEE…LLTI), 176 to 196 (IGFI…FIYS), 212 to 232 (LQTL…KLKN), 240 to 260 (YVID…FFII), 267 to 287 (IYDG…ASVV), 310 to 330 (YSLY…YVDG), 332 to 352 (IPVY…ELSY), and 377 to 397 (FIRM…LVGA). Active-site residues include serine 459, aspartate 581, and histidine 584.

It belongs to the acyltransferase 3 family.

The protein localises to the cell membrane. The sequence is that of Putative O-acetyltransferase SACOL0978 from Staphylococcus aureus (strain COL).